The following is a 494-amino-acid chain: Alanine--glyoxylate aminotransferase 2-like (494 aa).

Lys-291 is modified (N6-(pyridoxal phosphate)lysine).

Belongs to the class-III pyridoxal-phosphate-dependent aminotransferase family. Pyridoxal 5'-phosphate is required as a cofactor.

In Drosophila melanogaster (Fruit fly), this protein is Alanine--glyoxylate aminotransferase 2-like.